Reading from the N-terminus, the 834-residue chain is Translation factor GUF1 homolog, mitochondrial (834 aa).

The transit peptide at 1–66 (MKLCGVRGSG…RPLLAEPRRY (66 aa)) directs the protein to the mitochondrion. Residues 129–314 (ACIRNVSVVA…QIIDKVPPPR (186 aa)) enclose the tr-type G domain. Residues 138-145 (AHVDHGKT), 205-209 (DTPGH), and 259-262 (TKMD) contribute to the GTP site. Residues 475–507 (ATGPPETASRTKPATAAETASSDDASGSSGSSV) are disordered. Low complexity predominate over residues 488–507 (ATAAETASSDDASGSSGSSV).

It belongs to the TRAFAC class translation factor GTPase superfamily. Classic translation factor GTPase family. LepA subfamily.

The protein localises to the mitochondrion inner membrane. It carries out the reaction GTP + H2O = GDP + phosphate + H(+). Functionally, promotes mitochondrial protein synthesis. May act as a fidelity factor of the translation reaction, by catalyzing a one-codon backward translocation of tRNAs on improperly translocated ribosomes. Binds to mitochondrial ribosomes in a GTP-dependent manner. The sequence is that of Translation factor GUF1 homolog, mitochondrial from Leishmania major.